A 694-amino-acid chain; its full sequence is Transcription activator of gluconeogenesis PTRG_06536 (694 aa).

The tract at residues 1–57 (MTTPDAEDASPSPEYRSDQDDDMAAEQTTDRQSGDASPTQKPANGKPNAKDPLRPRR) is disordered. A DNA-binding region (zn(2)-C6 fungal-type) is located at residues 64–92 (CFACQRAHLTCGDERPCGRCIKRGLQDHC). 4 disordered regions span residues 175–216 (FSNQ…FGPL), 289–369 (AMAF…GDNP), 384–420 (AQRS…RDTK), and 539–569 (VNLG…SEGA). The segment covering 193–204 (SVQNAGAPSTMS) has biased composition (polar residues). The span at 205–214 (QGQQGMQQFG) shows a compositional bias: low complexity. A compositionally biased stretch (polar residues) spans 302 to 324 (WQETQSRQGSMHVHTPNNTSGSG). The span at 349 to 363 (ATHSTASPASTDAST) shows a compositional bias: low complexity. The span at 392–408 (RPQQENRPPTTALQSIH) shows a compositional bias: polar residues. A PAS domain is found at 485 to 559 (LQRHLMTLQE…SDTSTQNTTP (75 aa)).

Belongs to the ERT1/acuK family.

It is found in the nucleus. In terms of biological role, transcription factor which regulates nonfermentable carbon utilization. Activator of gluconeogenetic genes. The polypeptide is Transcription activator of gluconeogenesis PTRG_06536 (Pyrenophora tritici-repentis (strain Pt-1C-BFP) (Wheat tan spot fungus)).